Consider the following 288-residue polypeptide: Undecaprenyl-diphosphatase (288 aa).

8 consecutive transmembrane segments (helical) span residues 25–45 (GITEWLPISSTGHLILVNEFL), 53–73 (FIDMFNIVIQLGAILAVMVIY), 93–113 (WKLWLKVVIACIPSAFFGLLL), 121–141 (LSNFFVVAIMLVVYGIAFIWI), 171–191 (VLSIIPGTSRSGATILGGIIV), 196–216 (SVAADFTFFLGIPTMFGYSGL), 231–251 (GQAAILLVASVTAFLVSLFVI), and 263–283 (FTVFGKYRIVLGIIVLFYGAV).

This sequence belongs to the UppP family.

The protein resides in the cell membrane. It catalyses the reaction di-trans,octa-cis-undecaprenyl diphosphate + H2O = di-trans,octa-cis-undecaprenyl phosphate + phosphate + H(+). Catalyzes the dephosphorylation of undecaprenyl diphosphate (UPP). Confers resistance to bacitracin. In Streptococcus thermophilus (strain ATCC BAA-250 / LMG 18311), this protein is Undecaprenyl-diphosphatase.